A 459-amino-acid chain; its full sequence is GTPase Der (459 aa).

EngA-type G domains lie at 3 to 169 (PLVA…PPKE) and 183 to 358 (IRLA…DQFR). Residues 9–16 (GRPNVGKS), 56–60 (DTGGF), 119–122 (NKLD), 189–196 (GRPNVGKS), 236–240 (DTAGI), and 301–304 (NKWD) each bind GTP. One can recognise a KH-like domain in the interval 359–442 (FRAPTPQLNR…PIRLIFKGRP (84 aa)).

This sequence belongs to the TRAFAC class TrmE-Era-EngA-EngB-Septin-like GTPase superfamily. EngA (Der) GTPase family. In terms of assembly, associates with the 50S ribosomal subunit.

In terms of biological role, GTPase that plays an essential role in the late steps of ribosome biogenesis. The protein is GTPase Der of Myxococcus xanthus (strain DK1622).